Consider the following 81-residue polypeptide: MGGISVWQLLIIAVIVVLLFGTKKLRGIGGDLGSAVKGFKKAMSDEDSAKNEKDADFEPKSLEKQQQKEAAPETKKDKEQA.

A helical membrane pass occupies residues 1 to 21 (MGGISVWQLLIIAVIVVLLFG). Positions 42–81 (AMSDEDSAKNEKDADFEPKSLEKQQQKEAAPETKKDKEQA) are disordered.

This sequence belongs to the TatA/E family. In terms of assembly, the Tat system comprises two distinct complexes: a TatABC complex, containing multiple copies of TatA, TatB and TatC subunits, and a separate TatA complex, containing only TatA subunits. Substrates initially bind to the TatABC complex, which probably triggers association of the separate TatA complex to form the active translocon.

Its subcellular location is the cell inner membrane. Functionally, part of the twin-arginine translocation (Tat) system that transports large folded proteins containing a characteristic twin-arginine motif in their signal peptide across membranes. TatA could form the protein-conducting channel of the Tat system. The sequence is that of Sec-independent protein translocase protein TatA from Vibrio parahaemolyticus serotype O3:K6 (strain RIMD 2210633).